A 409-amino-acid polypeptide reads, in one-letter code: Cobalt-precorrin-5B C(1)-methyltransferase (409 aa).

This sequence belongs to the CbiD family.

It carries out the reaction Co-precorrin-5B + S-adenosyl-L-methionine = Co-precorrin-6A + S-adenosyl-L-homocysteine. The protein operates within cofactor biosynthesis; adenosylcobalamin biosynthesis; cob(II)yrinate a,c-diamide from sirohydrochlorin (anaerobic route): step 6/10. Catalyzes the methylation of C-1 in cobalt-precorrin-5B to form cobalt-precorrin-6A. The chain is Cobalt-precorrin-5B C(1)-methyltransferase from Methanopyrus kandleri (strain AV19 / DSM 6324 / JCM 9639 / NBRC 100938).